We begin with the raw amino-acid sequence, 435 residues long: MVDHSAALFNKAQNYMPGGVNSPVRAFGAVGGVPRFIKKASGPYLIDVDEKKYIDYVGSWGPMILGHAHPAVIQAAQEAVQNGLSFGAPCENEIKLAALIGEFMPSIEKVRMVNSGTEATMSALRLARGVTGRSKIIKFEGCYHGHADCLLVNAGSGALTFGMPSSPGVPLGTVQDTLTATFNDLDSVAALFEKYSKDIAAIIVEPIAGNMNLIPAAPDFLTGLRELCNQYGSLLIFDEVITGFRVAKGGAQSLYNIRPDLTALGKIIGGGMPVGAYGGRREIMNQLSPEGPVYQAGTLSGNPVAMAAGLATLKELTAENFYSNLKEKTERLVMGILSRAKAAKIPLTANFSCGIFGLIFTSEERVTRYAQAVNGNVEHFRSFFHKMLDNGVYLAPSAFESGFISAAHTNKEVDKTLDIIENIFSVSETYLRISV.

Residue K266 is modified to N6-(pyridoxal phosphate)lysine.

Belongs to the class-III pyridoxal-phosphate-dependent aminotransferase family. HemL subfamily. In terms of assembly, homodimer. The cofactor is pyridoxal 5'-phosphate.

It is found in the cytoplasm. The enzyme catalyses (S)-4-amino-5-oxopentanoate = 5-aminolevulinate. It functions in the pathway porphyrin-containing compound metabolism; protoporphyrin-IX biosynthesis; 5-aminolevulinate from L-glutamyl-tRNA(Glu): step 2/2. This chain is Glutamate-1-semialdehyde 2,1-aminomutase, found in Coxiella burnetii (strain CbuK_Q154) (Coxiella burnetii (strain Q154)).